Here is a 113-residue protein sequence, read N- to C-terminus: Nucleoid-associated protein THA_1374 (113 aa).

Belongs to the YbaB/EbfC family. In terms of assembly, homodimer.

It is found in the cytoplasm. Its subcellular location is the nucleoid. Binds to DNA and alters its conformation. May be involved in regulation of gene expression, nucleoid organization and DNA protection. The chain is Nucleoid-associated protein THA_1374 from Thermosipho africanus (strain TCF52B).